We begin with the raw amino-acid sequence, 153 residues long: Protein SREK1IP1 (153 aa).

The CCHC-type zinc finger occupies 13 to 30 (AGCRKCGYPGHLTFECRN). The tract at residues 44-153 (VSSTSSEDSD…SPNRSEVTKK (110 aa)) is disordered. Serine 52 is subject to Phosphoserine. Residues 66 to 84 (QEKRINEEEEKKKEKSREK) show a composition bias toward basic and acidic residues. The span at 85–94 (IKLKKKRKRS) shows a compositional bias: basic residues. Serine 96 and serine 97 each carry phosphoserine. Basic residues predominate over residues 106–141 (QKKQKYQKKEKKKEKKNKSKKGKHHKKEKKKRKKEK).

As to quaternary structure, interacts with SREK1/SFRS12.

In terms of biological role, possible splicing regulator involved in the control of cellular survival. This chain is Protein SREK1IP1 (Srek1ip1), found in Rattus norvegicus (Rat).